We begin with the raw amino-acid sequence, 315 residues long: MSVKHIQDNSNQEIAARIIQRAWKTFLNVSVYQHFKSLIDLRRQGEPRQIVRYINPKEAQLLDAAAGVQVRFRLGGVRFPPEIYYKIFTHRHIEDLCANSPRDYTKLPARYTSHNKDDPPQVEDNSGWYRRVENNGWRPVSYRFWMPLESGVVDSTKESEFHFSKLKRKQDLEKKRKIKKIDWMRQMYYMGSLEAKATDNETLGLIHKATKGLIKSIEDGGVDSVMEWEVDEVLNWTNTLNFDEYIASWRETATSNSSANLKDVKLQRIQKSLQSNIYGDEAKQAEESLYDDSTYYENAYTKQFTRLTPDSMFGM.

In terms of assembly, can homodimerize. Interacts with MFF; the interaction inhibits MFF interaction with DNM1L. As to expression, enriched in the pancreatic beta cell and the testis and is expressed at low levels in other tissues tested.

It localises to the cytoplasm. The protein resides in the cytosol. Its subcellular location is the mitochondrion outer membrane. Acts as an inhibitor of mitochondrial fission. Interacts with MFF and prevents DNM1L recruitment to mitochondria, promoting a more fused mitochondrial network. This chain is Protein MFI, found in Mus musculus (Mouse).